Reading from the N-terminus, the 68-residue chain is MYNPREINIKKDFTIQQKIDPGKVQIIVLDGNQGTAHVLDAPEHGKTVIQTVKGSFARVDHEIGFKVK.

To B.subtilis XtrA.

This is an uncharacterized protein from Bacillus subtilis (strain 168).